A 312-amino-acid chain; its full sequence is Phosphoribosylaminoimidazole-succinocarboxamide synthase (312 aa).

It belongs to the SAICAR synthetase family.

It carries out the reaction 5-amino-1-(5-phospho-D-ribosyl)imidazole-4-carboxylate + L-aspartate + ATP = (2S)-2-[5-amino-1-(5-phospho-beta-D-ribosyl)imidazole-4-carboxamido]succinate + ADP + phosphate + 2 H(+). The protein operates within purine metabolism; IMP biosynthesis via de novo pathway; 5-amino-1-(5-phospho-D-ribosyl)imidazole-4-carboxamide from 5-amino-1-(5-phospho-D-ribosyl)imidazole-4-carboxylate: step 1/2. The polypeptide is Phosphoribosylaminoimidazole-succinocarboxamide synthase (Legionella pneumophila (strain Paris)).